Consider the following 371-residue polypeptide: Queuine tRNA-ribosyltransferase (371 aa).

Catalysis depends on D90, which acts as the Proton acceptor. Substrate is bound by residues 90–94, D144, Q189, and G215; that span reads DSGGF. The RNA binding stretch occupies residues 246–252; it reads GVGTPEN. Residue D265 is the Nucleophile of the active site. The tract at residues 270-274 is RNA binding; important for wobble base 34 recognition; the sequence is TRNAR. 4 residues coordinate Zn(2+): C303, C305, C308, and H334.

This sequence belongs to the queuine tRNA-ribosyltransferase family. In terms of assembly, homodimer. Within each dimer, one monomer is responsible for RNA recognition and catalysis, while the other monomer binds to the replacement base PreQ1. Requires Zn(2+) as cofactor.

The enzyme catalyses 7-aminomethyl-7-carbaguanine + guanosine(34) in tRNA = 7-aminomethyl-7-carbaguanosine(34) in tRNA + guanine. Its pathway is tRNA modification; tRNA-queuosine biosynthesis. Functionally, catalyzes the base-exchange of a guanine (G) residue with the queuine precursor 7-aminomethyl-7-deazaguanine (PreQ1) at position 34 (anticodon wobble position) in tRNAs with GU(N) anticodons (tRNA-Asp, -Asn, -His and -Tyr). Catalysis occurs through a double-displacement mechanism. The nucleophile active site attacks the C1' of nucleotide 34 to detach the guanine base from the RNA, forming a covalent enzyme-RNA intermediate. The proton acceptor active site deprotonates the incoming PreQ1, allowing a nucleophilic attack on the C1' of the ribose to form the product. After dissociation, two additional enzymatic reactions on the tRNA convert PreQ1 to queuine (Q), resulting in the hypermodified nucleoside queuosine (7-(((4,5-cis-dihydroxy-2-cyclopenten-1-yl)amino)methyl)-7-deazaguanosine). The chain is Queuine tRNA-ribosyltransferase from Helicobacter acinonychis (strain Sheeba).